We begin with the raw amino-acid sequence, 505 residues long: RNA-splicing ligase RtcB homolog (505 aa).

Mn(2+) is bound by residues aspartate 119, cysteine 122, histidine 227, and histidine 259. GMP is bound at residue 226–230 (NHYAE). Serine 300 is modified (phosphoserine). Mn(2+) is bound at residue histidine 353. GMP is bound by residues 353–354 (HN), 402–405 (GGTM), serine 409, and 428–431 (HGAG). Catalysis depends on histidine 428, which acts as the GMP-histidine intermediate. Lysine 496 participates in a covalent cross-link: Glycyl lysine isopeptide (Lys-Gly) (interchain with G-Cter in SUMO2). Lysine 504 contributes to the GMP binding site.

It belongs to the RtcB family. Catalytic component of the tRNA-splicing ligase complex. Requires Mn(2+) as cofactor.

Its subcellular location is the nucleus. The protein resides in the cytoplasm. The enzyme catalyses a 3'-end 3'-phospho-ribonucleotide-RNA + a 5'-end dephospho-ribonucleoside-RNA + GTP = a ribonucleotidyl-ribonucleotide-RNA + GMP + diphosphate. It carries out the reaction a 3'-end 2',3'-cyclophospho-ribonucleotide-RNA + a 5'-end dephospho-ribonucleoside-RNA + GTP + H2O = a ribonucleotidyl-ribonucleotide-RNA + GMP + diphosphate + H(+). In terms of biological role, catalytic subunit of the tRNA-splicing ligase complex that acts by directly joining spliced tRNA halves to mature-sized tRNAs by incorporating the precursor-derived splice junction phosphate into the mature tRNA as a canonical 3',5'-phosphodiester. May act as an RNA ligase with broad substrate specificity, and may function toward other RNAs. The polypeptide is RNA-splicing ligase RtcB homolog (Bos taurus (Bovine)).